The sequence spans 289 residues: Serine/threonine-protein phosphatase Pgam5, mitochondrial (289 aa).

A helical transmembrane segment spans residues 7–23 (FVCGTGAGLAVYYLQRL).

This sequence belongs to the phosphoglycerate mutase family. BPG-dependent PGAM subfamily. In terms of assembly, interacts with Pk92B/ASK1.

Its subcellular location is the mitochondrion outer membrane. It catalyses the reaction O-phospho-L-seryl-[protein] + H2O = L-seryl-[protein] + phosphate. It carries out the reaction O-phospho-L-threonyl-[protein] + H2O = L-threonyl-[protein] + phosphate. Functionally, displays phosphatase activity for serine/threonine residues, and dephosphorylates and activates Pk92B kinase. Has apparently no phosphoglycerate mutase activity. The protein is Serine/threonine-protein phosphatase Pgam5, mitochondrial of Drosophila erecta (Fruit fly).